Here is an 836-residue protein sequence, read N- to C-terminus: DNA gyrase subunit A (836 aa).

The region spanning 46–510 (LPDARDGLKP…ISEEIDDESL (465 aa)) is the Topo IIA-type catalytic domain. Tyrosine 134 acts as the O-(5'-phospho-DNA)-tyrosine intermediate in catalysis. The GyrA-box signature appears at 537-543 (QHRGGVG).

The protein belongs to the type II topoisomerase GyrA/ParC subunit family. Heterotetramer, composed of two GyrA and two GyrB chains. In the heterotetramer, GyrA contains the active site tyrosine that forms a transient covalent intermediate with DNA, while GyrB binds cofactors and catalyzes ATP hydrolysis.

Its subcellular location is the cytoplasm. It carries out the reaction ATP-dependent breakage, passage and rejoining of double-stranded DNA.. Functionally, a type II topoisomerase that negatively supercoils closed circular double-stranded (ds) DNA in an ATP-dependent manner to modulate DNA topology and maintain chromosomes in an underwound state. Negative supercoiling favors strand separation, and DNA replication, transcription, recombination and repair, all of which involve strand separation. Also able to catalyze the interconversion of other topological isomers of dsDNA rings, including catenanes and knotted rings. Type II topoisomerases break and join 2 DNA strands simultaneously in an ATP-dependent manner. The polypeptide is DNA gyrase subunit A (Mycoplasma genitalium (strain ATCC 33530 / DSM 19775 / NCTC 10195 / G37) (Mycoplasmoides genitalium)).